The sequence spans 100 residues: Protein SAMBA (100 aa).

The segment at Met-1 to Ser-40 is disordered.

As to quaternary structure, interacts with CDC27B and CYCA2-3. As to expression, expressed in embryos, germinating seeds, hypocotyls and pollen grains.

In terms of biological role, plays an important role in organ size control. Acts as negative regulator of the anaphase-promoting complex/cyclosome (APC/C). Regulates cell proliferation during early development by targeting CYCA2-3 for APC/C-mediated degradation. Required for mitosis I during pollen microspore development. In Arabidopsis thaliana (Mouse-ear cress), this protein is Protein SAMBA.